A 1066-amino-acid chain; its full sequence is Kinesin-like protein Klp61F (1066 aa).

The Kinesin motor domain maps to 19–356 (NIQVYVRVRP…LEYAHRAKNI (338 aa)). Residue 103–110 (GQTGTGKT) coordinates ATP. The stretch at 362–462 (VNQKLTKKTV…KTEENLLNTK (101 aa)) forms a coiled coil. Thr-520 is modified (phosphothreonine). 4 coiled-coil regions span residues 540–569 (DRMQ…QLSQ), 639–738 (LMSK…QIKN), 808–875 (CSML…LITE), and 889–918 (DLVQ…ELVR). Thr-933 is modified (phosphothreonine). Ser-949 is modified (phosphoserine). Residues 990–1002 (ELSETETIMNSTP) show a composition bias toward polar residues. Disordered regions lie at residues 990-1009 (ELSE…VDGV) and 1016-1066 (GTTR…ENVA). Over residues 1033–1051 (GGKRSSSLSRSLTPSKTSP) the composition is skewed to low complexity. A Phosphoserine modification is found at Ser-1043. Thr-1045 bears the Phosphothreonine mark. 2 positions are modified to phosphoserine: Ser-1050 and Ser-1054.

The protein belongs to the TRAFAC class myosin-kinesin ATPase superfamily. Kinesin family. BimC subfamily. As to quaternary structure, homotetramer. Consists of two pairs of polypeptides associated by coiled-coil interactions to form two homodimers. The homodimers are linked by lateral interactions between their coiled-coil regions to form a bipolar homotetramer consisting of a central rod with two motor domains projecting from either end. Parallel coiled coils extend from each pair of motor heads, switch to two antiparallel coiled coils in the central region and then back to parallel coiled coils. Interacts with Wee1. Post-translationally, phosphorylation is required for localization to mitotic spindles. Phosphorylation of Thr-933 during mitosis controls association with the spindle apparatus. Phosphorylated in vitro by Wee1.

The protein localises to the cytoplasm. Its subcellular location is the cytoskeleton. The protein resides in the spindle. It localises to the spindle pole. Functionally, important role in mitotic dividing cells. Microtubule motor required for spindle body separation. Slow plus-end directed microtubule motor capable of cross-linking and sliding apart antiparallel microtubules, thereby pushing apart the associated spindle poles during spindle assembly and function. Forms cross-links between microtubules within interpolar microtubule bundles. Contributes to the length of the metaphase spindle, maintains the prometaphase spindle by antagonizing Ncd, drives anaphase B, and also contributes to normal chromosome congression, kinetochore spacing, and anaphase A rates. Displays microtubule-stimulated ATPase activity. Required for normal fusome organization. Required in non-mitotic cells for transport of secretory proteins from the Golgi complex to the cell surface. The polypeptide is Kinesin-like protein Klp61F (Drosophila melanogaster (Fruit fly)).